A 151-amino-acid polypeptide reads, in one-letter code: Shadow of prion protein (151 aa).

The first 24 residues, 1 to 24, serve as a signal peptide directing secretion; the sequence is MNWAPATCWALLLAAAFLCDSGAA. The interval 89-113 is disordered; sequence WRRAAGPGERGLEDEEDGVPGGNGT. N-linked (GlcNAc...) asparagine glycosylation is present at N111. G126 carries the GPI-anchor amidated glycine lipid modification. The propeptide at 127-151 is removed in mature form; the sequence is AGPTRGPRLCLVLGGALGALGLLRP.

Belongs to the SPRN family. Post-translationally, N-glycosylated. As to expression, mainly expressed in brain. In brain, it is expressed in hippocampus.

It is found in the cell membrane. Prion-like protein that has PrP(C)-like neuroprotective activity. May act as a modulator for the biological actions of normal and abnormal PrP. The protein is Shadow of prion protein (SPRN) of Homo sapiens (Human).